The sequence spans 541 residues: Apolipoprotein N-acyltransferase (541 aa).

6 consecutive transmembrane segments (helical) span residues 21 to 41 (LSGF…WYSL), 54 to 74 (LFVS…SWML), 82 to 102 (LIYL…SGFS), 116 to 136 (FLWS…YGIF), 157 to 177 (FGGF…NMSF), and 189 to 209 (MLWV…YEYL). The CN hydrolase domain occupies 220–499 (LRVAVVQPAH…SGVLETSLPL (280 aa)). The Proton acceptor role is filled by E264. K349 is a catalytic residue. C404 serves as the catalytic Nucleophile. A helical transmembrane segment spans residues 512–532 (YPMILIAFCAVSYLGGGFLGY).

Belongs to the CN hydrolase family. Apolipoprotein N-acyltransferase subfamily.

The protein localises to the cell inner membrane. It carries out the reaction N-terminal S-1,2-diacyl-sn-glyceryl-L-cysteinyl-[lipoprotein] + a glycerophospholipid = N-acyl-S-1,2-diacyl-sn-glyceryl-L-cysteinyl-[lipoprotein] + a 2-acyl-sn-glycero-3-phospholipid + H(+). Its pathway is protein modification; lipoprotein biosynthesis (N-acyl transfer). Functionally, catalyzes the phospholipid dependent N-acylation of the N-terminal cysteine of apolipoprotein, the last step in lipoprotein maturation. This Chlamydia pneumoniae (Chlamydophila pneumoniae) protein is Apolipoprotein N-acyltransferase.